The following is a 312-amino-acid chain: Phosphatidate cytidylyltransferase (312 aa).

A disordered region spans residues 1 to 31; sequence MASTDPGTGTPLDESVPGIKRAMRQSTKNTP. The next 8 membrane-spanning stretches (helical) occupy residues 37-57, 58-78, 85-105, 110-130, 157-177, 186-206, 223-243, and 247-267; these read LPAA…TLVF, APRI…HEVV, GYVI…WLTW, VGAL…RLVM, ATVF…LLVY, FCLM…GVLF, GFAG…TFLA, and PWVG…GDLV.

This sequence belongs to the CDS family.

It localises to the cell membrane. The enzyme catalyses a 1,2-diacyl-sn-glycero-3-phosphate + CTP + H(+) = a CDP-1,2-diacyl-sn-glycerol + diphosphate. The protein operates within phospholipid metabolism; CDP-diacylglycerol biosynthesis; CDP-diacylglycerol from sn-glycerol 3-phosphate: step 3/3. The sequence is that of Phosphatidate cytidylyltransferase (cdsA) from Mycobacterium leprae (strain TN).